We begin with the raw amino-acid sequence, 618 residues long: MGNYKSRPTQTCTDEWKKKVSESYVITIERLEDDLKIKEKELTELRNIFGSDEAFSKVNLNYHTENGLSLLHLCCICGGNKSHIRTLMLKGLRPSRLTRNGFTALHLAVYKDNAELITSLLHGGADIQQVGYGGLTALHIATIAGHLEAADVLLQHGANVNIQDAVFFTPLHIAAYYGHEQVTRLLLKFGADVNVSGEVGDRPLHLASAKGFLNIAKLLMEEGSKADVNAQDNEDHVPLHFCSRFGHHDIVKYLLQNDLEVQPHVVNIYGDTPLHLACYNGKFEVAKEIIQISGTESLTKENIFSETAFHSACTYGKSIDLVKFLLDQNVININHQGRDGHTGLHSACYHGHIHLVQFLLDNGADMNLVACDPSRSSGEKDEQTCLMWAYEKGHDAIVTLLKHYKRPQDELPCNEYSQPGGDGSYVSVPSPLGKIKSMTKEKADILLLRAGLPSHFHLQLSEIEFHEIIGSGSFGKVYKGRCRNKIVAIKRYRANTYCSKSDVDMFCREVSILCQLNHPCVIQFVGACLNDPSQFAIVTQYISGGSLFSLLHEQKRILDLQSKLIIAVDVARGMEYLHNLTQPIIHRDLNRSLKYLSAFCCCPNHLFLTAHTIYLLAP.

Residue glycine 2 is the site of N-myristoyl glycine attachment. The stretch at 21-51 (SESYVITIERLEDDLKIKEKELTELRNIFGS) forms a coiled coil. ANK repeat units lie at residues 66-96 (NGLSLLHLCCICGGNKSHIRTLMLKGLRPSR), 100-129 (NGFTALHLAVYKDNAELITSLLHGGADIQQ), 133-162 (GGLTALHIATIAGHLEAADVLLQHGANVNI), 166-195 (VFFTPLHIAAYYGHEQVTRLLLKFGADVNV), 199-228 (VGDRPLHLASAKGFLNIAKLLMEEGSKADV), 234-263 (EDHVPLHFCSRFGHHDIVKYLLQNDLEVQP), 269-298 (YGDTPLHLACYNGKFEVAKEIIQISGTESL), 304-335 (FSETAFHSACTYGKSIDLVKFLLDQNVININH), 339-368 (DGHTGLHSACYHGHIHLVQFLLDNGADMNL), and 381-410 (DEQTCLMWAYEKGHDAIVTLLKHYKRPQDE). In terms of domain architecture, Protein kinase spans 463–618 (IEFHEIIGSG…TAHTIYLLAP (156 aa)). Residues 469–477 (IGSGSFGKV) and lysine 490 contribute to the ATP site. The Proton acceptor role is filled by aspartate 588.

It belongs to the protein kinase superfamily. TKL Ser/Thr protein kinase family. MAP kinase kinase kinase subfamily. Interacts with TNNI3, ACTC, ACTA1, MYBPC3, AIP, FABP3 and HADHB. The cofactor is Mg(2+). Autophosphorylated.

Its subcellular location is the nucleus. It localises to the cytoplasm. It catalyses the reaction L-seryl-[protein] + ATP = O-phospho-L-seryl-[protein] + ADP + H(+). The enzyme catalyses L-threonyl-[protein] + ATP = O-phospho-L-threonyl-[protein] + ADP + H(+). May play a role in cardiac physiology. This Pongo abelii (Sumatran orangutan) protein is Serine/threonine-protein kinase TNNI3K.